The sequence spans 285 residues: Nucleotide-binding protein GSU1884 (285 aa).

8-15 serves as a coordination point for ATP; sequence GLSGSGKS. 59–62 lines the GTP pocket; sequence DIRG.

The protein belongs to the RapZ-like family.

Its function is as follows. Displays ATPase and GTPase activities. This chain is Nucleotide-binding protein GSU1884, found in Geobacter sulfurreducens (strain ATCC 51573 / DSM 12127 / PCA).